The following is a 368-amino-acid chain: Chaperone protein DnaJ (368 aa).

The region spanning 5 to 65 is the J domain; sequence DYYEVLGLTK…QKKARYDQFG (61 aa). The CR-type zinc-finger motif lies at 125–207; the sequence is GKETEIEIPK…CRGEGKVQKR (83 aa). Positions 138, 141, 155, 158, 181, 184, 195, and 198 each coordinate Zn(2+). 4 CXXCXGXG motif repeats span residues 138-145, 155-162, 181-188, and 195-202; these read CETCHGSG, CSTCNGAG, CTTCHGTG, and CSTCRGEG.

It belongs to the DnaJ family. In terms of assembly, homodimer. The cofactor is Zn(2+).

The protein localises to the cytoplasm. Its function is as follows. Participates actively in the response to hyperosmotic and heat shock by preventing the aggregation of stress-denatured proteins and by disaggregating proteins, also in an autonomous, DnaK-independent fashion. Unfolded proteins bind initially to DnaJ; upon interaction with the DnaJ-bound protein, DnaK hydrolyzes its bound ATP, resulting in the formation of a stable complex. GrpE releases ADP from DnaK; ATP binding to DnaK triggers the release of the substrate protein, thus completing the reaction cycle. Several rounds of ATP-dependent interactions between DnaJ, DnaK and GrpE are required for fully efficient folding. Also involved, together with DnaK and GrpE, in the DNA replication of plasmids through activation of initiation proteins. The protein is Chaperone protein DnaJ of Lysinibacillus sphaericus (Bacillus sphaericus).